The following is a 342-amino-acid chain: Succinylglutamate desuccinylase (342 aa).

3 residues coordinate Zn(2+): His-63, Glu-66, and His-155. Residue Glu-219 is part of the active site.

This sequence belongs to the AspA/AstE family. Succinylglutamate desuccinylase subfamily. Zn(2+) serves as cofactor.

It catalyses the reaction N-succinyl-L-glutamate + H2O = L-glutamate + succinate. It functions in the pathway amino-acid degradation; L-arginine degradation via AST pathway; L-glutamate and succinate from L-arginine: step 5/5. In terms of biological role, transforms N(2)-succinylglutamate into succinate and glutamate. This Vibrio campbellii (strain ATCC BAA-1116) protein is Succinylglutamate desuccinylase.